Reading from the N-terminus, the 623-residue chain is 1-butanol dehydrogenase (quinone) (623 aa).

The first 28 residues, 1 to 28, serve as a signal peptide directing secretion; the sequence is MKKSHAKPFALRAIVVATAAALSLPAAA. Positions 40, 43, and 46 each coordinate Ca(2+). Residue E90 participates in pyrroloquinoline quinone binding. Residues C134 and C135 are joined by a disulfide bond. Pyrroloquinoline quinone is bound by residues R140, T184, and 202 to 204; that span reads HGS. E208 provides a ligand contact to Ca(2+). Positions 235–274 are disordered; it reads HMGRLNGKDSTPTGDPKAPSWPDDPNSPTGKVEAWSQGGG. N295 and D345 together coordinate Ca(2+). Residue D345 is the Proton acceptor of the active site. Position 374 (R374) interacts with pyrroloquinoline quinone. The interval 420-440 is disordered; the sequence is GKPIEKDNRPPQPKEGADKGE. Residue A592 participates in pyrroloquinoline quinone binding.

It belongs to the bacterial PQQ dehydrogenase family. Pyrroloquinoline quinone is required as a cofactor. It depends on Ca(2+) as a cofactor.

Its subcellular location is the periplasm. The catalysed reaction is butan-1-ol + a quinone = butanal + a quinol. Its function is as follows. Involved in the metabolism of butane. May function primarily in energy generation. Catalyzes the oxidation of 1-butanol to 1-butanal. Also able to use 2-butanol and butyraldehyde, although the affinity is comparatively low. The polypeptide is 1-butanol dehydrogenase (quinone) (Thauera butanivorans (strain ATCC 43655 / DSM 2080 / JCM 20651 / CCUG 51053 / NBRC 103042 / IAM 12574 / Bu B1211) (Pseudomonas butanovora)).